A 372-amino-acid chain; its full sequence is N-methyl-L-tryptophan oxidase (372 aa).

FAD is bound at residue 4-34 (DLIIIGSGSVGAAAGYYATRAGLNVLMTDAH). Cys308 is modified (S-8alpha-FAD cysteine).

It belongs to the MSOX/MTOX family. MTOX subfamily. In terms of assembly, monomer. Requires FAD as cofactor.

The enzyme catalyses N(alpha)-methyl-L-tryptophan + O2 + H2O = L-tryptophan + formaldehyde + H2O2. Catalyzes the oxidative demethylation of N-methyl-L-tryptophan. This Escherichia coli O157:H7 protein is N-methyl-L-tryptophan oxidase.